The following is a 357-amino-acid chain: Protein pelota homolog (357 aa).

This sequence belongs to the eukaryotic release factor 1 family. Pelota subfamily. Monomer. A divalent metal cation serves as cofactor.

Its subcellular location is the cytoplasm. Its function is as follows. May function in recognizing stalled ribosomes, interact with stem-loop structures in stalled mRNA molecules, and effect endonucleolytic cleavage of the mRNA. May play a role in the release non-functional ribosomes and degradation of damaged mRNAs. Has endoribonuclease activity. This is Protein pelota homolog from Thermococcus onnurineus (strain NA1).